We begin with the raw amino-acid sequence, 160 residues long: Ribosomal RNA large subunit methyltransferase H (160 aa).

Residues L76, G108, and 127–132 (FGALTW) contribute to the S-adenosyl-L-methionine site.

This sequence belongs to the RNA methyltransferase RlmH family. In terms of assembly, homodimer.

It localises to the cytoplasm. The catalysed reaction is pseudouridine(1915) in 23S rRNA + S-adenosyl-L-methionine = N(3)-methylpseudouridine(1915) in 23S rRNA + S-adenosyl-L-homocysteine + H(+). Its function is as follows. Specifically methylates the pseudouridine at position 1915 (m3Psi1915) in 23S rRNA. The sequence is that of Ribosomal RNA large subunit methyltransferase H from Mesorhizobium japonicum (strain LMG 29417 / CECT 9101 / MAFF 303099) (Mesorhizobium loti (strain MAFF 303099)).